Consider the following 238-residue polypeptide: ATP-dependent dethiobiotin synthetase BioD (238 aa).

Residue 13-18 (EIGKTV) coordinates ATP. Thr17 lines the Mg(2+) pocket. The active site involves Lys38. Thr42 serves as a coordination point for substrate. 2 residues coordinate Mg(2+): Arg59 and Glu111. ATP is bound by residues 111 to 114 (EGAG), 175 to 176 (NQ), and 204 to 206 (PLL).

Belongs to the dethiobiotin synthetase family. As to quaternary structure, homodimer. Mg(2+) serves as cofactor.

The protein localises to the cytoplasm. The catalysed reaction is (7R,8S)-7,8-diammoniononanoate + CO2 + ATP = (4R,5S)-dethiobiotin + ADP + phosphate + 3 H(+). The protein operates within cofactor biosynthesis; biotin biosynthesis; biotin from 7,8-diaminononanoate: step 1/2. In terms of biological role, catalyzes a mechanistically unusual reaction, the ATP-dependent insertion of CO2 between the N7 and N8 nitrogen atoms of 7,8-diaminopelargonic acid (DAPA, also called 7,8-diammoniononanoate) to form a ureido ring. This is ATP-dependent dethiobiotin synthetase BioD from Geobacillus kaustophilus (strain HTA426).